Here is a 242-residue protein sequence, read N- to C-terminus: MDAIKKKMSAMKTKLEEADKQAQDAEDELTATLEKAAETEQTADELQKTLADLEDELDAAESRLTSLTEKYNEEEKKAEEGRRAHKELENRGQTDYSRLNRLETELAEITEQNEVVVEKLSELSSQLEENERILDEEEERCATADAQVKELEVDVVQVGNQLRSMEINEEKASKSNDQSANKLEDTIEKYNTIKDRADDAEARSRDLEAELNECDDELAAAKEAYGQSKADMDELLLELASM.

Disordered stretches follow at residues Met1–Ala31 and Thr65–Tyr96. The stretch at Met1–Met242 forms a coiled coil. 2 stretches are compositionally biased toward basic and acidic residues: residues Thr13–Gln23 and Lys70–Tyr96.

Belongs to the tropomyosin family. As to quaternary structure, homodimer. Expressed ubiquitously.

The chain is Tropomyosin-1 (TPM1) from Podocoryna carnea (Hydrozoan).